The sequence spans 340 residues: Putative inactive cytochrome P450 family member 4Z2 (340 aa).

Residues 1 to 9 lie on the Cytoplasmic side of the membrane; that stretch reads MEPSWLQEL. The helical; Signal-anchor for type II membrane protein transmembrane segment at 10–30 threads the bilayer; sequence MAHPFLLLILLCMSLLLFQVI. The Lumenal segment spans residues 31 to 340; it reads RLYQRRRWTI…AKYPEHQQRC (310 aa).

It belongs to the cytochrome P450 family. It depends on heme as a cofactor. As to expression, detected at low levels in mammary gland and mammary carcinoma.

The protein resides in the membrane. The chain is Putative inactive cytochrome P450 family member 4Z2 (CYP4Z2P) from Homo sapiens (Human).